A 597-amino-acid polypeptide reads, in one-letter code: NADH-quinone oxidoreductase subunit C/D (597 aa).

The tract at residues 1–187 (MIDENKKKNT…ESFFLDEQKE (187 aa)) is NADH dehydrogenase I subunit C. Positions 211-597 (DFMFLNLGPN…IDFVMSDVDR (387 aa)) are NADH dehydrogenase I subunit D.

It in the N-terminal section; belongs to the complex I 30 kDa subunit family. The protein in the C-terminal section; belongs to the complex I 49 kDa subunit family. NDH-1 is composed of 13 different subunits. Subunits NuoB, CD, E, F, and G constitute the peripheral sector of the complex.

It is found in the cell inner membrane. The catalysed reaction is a quinone + NADH + 5 H(+)(in) = a quinol + NAD(+) + 4 H(+)(out). Functionally, NDH-1 shuttles electrons from NADH, via FMN and iron-sulfur (Fe-S) centers, to quinones in the respiratory chain. The immediate electron acceptor for the enzyme in this species is believed to be ubiquinone. Couples the redox reaction to proton translocation (for every two electrons transferred, four hydrogen ions are translocated across the cytoplasmic membrane), and thus conserves the redox energy in a proton gradient. This is NADH-quinone oxidoreductase subunit C/D from Buchnera aphidicola subsp. Schizaphis graminum (strain Sg).